Consider the following 367-residue polypeptide: Methylthioribose-1-phosphate isomerase (367 aa).

D250 (proton donor) is an active-site residue.

Belongs to the eIF-2B alpha/beta/delta subunits family. MtnA subfamily.

The protein resides in the cytoplasm. It is found in the nucleus. It catalyses the reaction 5-(methylsulfanyl)-alpha-D-ribose 1-phosphate = 5-(methylsulfanyl)-D-ribulose 1-phosphate. It functions in the pathway amino-acid biosynthesis; L-methionine biosynthesis via salvage pathway; L-methionine from S-methyl-5-thio-alpha-D-ribose 1-phosphate: step 1/6. Its function is as follows. Catalyzes the interconversion of methylthioribose-1-phosphate (MTR-1-P) into methylthioribulose-1-phosphate (MTRu-1-P). The sequence is that of Methylthioribose-1-phosphate isomerase (IDI2) from Hordeum vulgare (Barley).